Consider the following 169-residue polypeptide: Lutropin/choriogonadotropin subunit beta (169 aa).

An N-terminal signal peptide occupies residues 1–20 (METLQGLLLWMLLSVGGVWA). 6 disulfides stabilise this stretch: cysteine 29–cysteine 77, cysteine 43–cysteine 92, cysteine 46–cysteine 130, cysteine 54–cysteine 108, cysteine 58–cysteine 110, and cysteine 113–cysteine 120. Asparagine 33 is a glycosylation site (N-linked (GlcNAc...) asparagine). The interval 131-169 (APQASSSSKDPPSQPLTSTSTPTPGASRRSSHPLPIKTS) is disordered. Serine 138 and serine 143 each carry an O-linked (GalNAc...) serine glycan. Residues 145–158 (PLTSTSTPTPGASR) are compositionally biased toward low complexity. An O-linked (GalNAc...) threonine glycan is attached at threonine 147. O-linked (GalNAc...) serine glycosylation is present at serine 148. An O-linked (GalNAc...) threonine glycan is attached at threonine 149. O-linked (GalNAc...) serine glycosylation is present at serine 150. Threonine 151 and threonine 153 each carry an O-linked (GalNAc...) threonine glycan. O-linked (GalNAc...) serine glycans are attached at residues serine 157, serine 160, serine 161, and serine 169.

It belongs to the glycoprotein hormones subunit beta family. As to quaternary structure, heterodimer of a common alpha chain and a unique beta chain which confers biological specificity to thyrotropin, lutropin, follitropin and gonadotropin. In terms of processing, microheterogeneity at Asn-33. O-glycosylation appears to be responsible for the beta subunit contribution to the difference in LH-receptor binding activity between LSH-B and CG-B.

Its subcellular location is the secreted. Promotes spermatogenesis and ovulation by stimulating the testes and ovaries to synthesize steroids. The chain is Lutropin/choriogonadotropin subunit beta (LHB) from Equus caballus (Horse).